Reading from the N-terminus, the 421-residue chain is Putative hydro-lyase KRH_21160 (421 aa).

Disordered regions lie at residues 200 to 298 (TWGH…SPVT) and 312 to 421 (TRAG…AVSR). A compositionally biased stretch (basic residues) spans 224 to 237 (GSRRRPRWWSRLRR). Composition is skewed to low complexity over residues 243–260 (PRAT…TRCP) and 370–380 (SRGPGPCPRAA).

Belongs to the D-glutamate cyclase family.

The polypeptide is Putative hydro-lyase KRH_21160 (Kocuria rhizophila (strain ATCC 9341 / DSM 348 / NBRC 103217 / DC2201)).